The chain runs to 118 residues: Basic phospholipase A2 homolog 1 (118 aa).

Disulfide bonds link Cys11-Cys71, Cys27-Cys117, Cys29-Cys45, Cys44-Cys98, Cys51-Cys91, Cys60-Cys84, and Cys78-Cys89. The important for membrane-damaging activities in eukaryotes and bacteria; heparin-binding stretch occupies residues 106-118; it reads NKNFNIDTKKRCK.

It belongs to the phospholipase A2 family. Group I subfamily. D49 sub-subfamily. In terms of tissue distribution, expressed by the venom gland.

Its subcellular location is the secreted. The polypeptide is Basic phospholipase A2 homolog 1 (Laticauda colubrina (Yellow-lipped sea krait)).